We begin with the raw amino-acid sequence, 517 residues long: Bifunctional purine biosynthesis protein PurH (517 aa).

Positions 1-151 constitute an MGS-like domain; that stretch reads MTQERKIKRA…KNFAHVAVLC (151 aa).

It belongs to the PurH family.

It carries out the reaction (6R)-10-formyltetrahydrofolate + 5-amino-1-(5-phospho-beta-D-ribosyl)imidazole-4-carboxamide = 5-formamido-1-(5-phospho-D-ribosyl)imidazole-4-carboxamide + (6S)-5,6,7,8-tetrahydrofolate. The enzyme catalyses IMP + H2O = 5-formamido-1-(5-phospho-D-ribosyl)imidazole-4-carboxamide. It functions in the pathway purine metabolism; IMP biosynthesis via de novo pathway; 5-formamido-1-(5-phospho-D-ribosyl)imidazole-4-carboxamide from 5-amino-1-(5-phospho-D-ribosyl)imidazole-4-carboxamide (10-formyl THF route): step 1/1. The protein operates within purine metabolism; IMP biosynthesis via de novo pathway; IMP from 5-formamido-1-(5-phospho-D-ribosyl)imidazole-4-carboxamide: step 1/1. The protein is Bifunctional purine biosynthesis protein PurH of Elusimicrobium minutum (strain Pei191).